Reading from the N-terminus, the 815-residue chain is Probable beta-glucosidase G (815 aa).

The first 20 residues, 1 to 20, serve as a signal peptide directing secretion; that stretch reads MASIAHLVVSGLLAATAVNG. N-linked (GlcNAc...) asparagine glycosylation is found at Asn-40, Asn-58, Asn-229, and Asn-276. The active site involves Asp-304. N-linked (GlcNAc...) asparagine glycans are attached at residues Asn-343, Asn-350, Asn-402, Asn-507, Asn-563, Asn-584, Asn-623, Asn-662, and Asn-715.

This sequence belongs to the glycosyl hydrolase 3 family.

It is found in the secreted. The enzyme catalyses Hydrolysis of terminal, non-reducing beta-D-glucosyl residues with release of beta-D-glucose.. It functions in the pathway glycan metabolism; cellulose degradation. In terms of biological role, beta-glucosidases are one of a number of cellulolytic enzymes involved in the degradation of cellulosic biomass. Catalyzes the last step releasing glucose from the inhibitory cellobiose. This is Probable beta-glucosidase G (bglG) from Aspergillus flavus (strain ATCC 200026 / FGSC A1120 / IAM 13836 / NRRL 3357 / JCM 12722 / SRRC 167).